The following is a 61-amino-acid chain: Photosystem II reaction center protein K (61 aa).

Residues 1–24 constitute a propeptide that is removed on maturation; it reads MPNILSLTCICFNSVIYPTSFFFA. Residues 32–52 traverse the membrane as a helical segment; that stretch reads IFNPIVDFMPVIPVLFFLLAF.

It belongs to the PsbK family. As to quaternary structure, PSII is composed of 1 copy each of membrane proteins PsbA, PsbB, PsbC, PsbD, PsbE, PsbF, PsbH, PsbI, PsbJ, PsbK, PsbL, PsbM, PsbT, PsbX, PsbY, PsbZ, Psb30/Ycf12, at least 3 peripheral proteins of the oxygen-evolving complex and a large number of cofactors. It forms dimeric complexes.

It is found in the plastid. The protein resides in the chloroplast thylakoid membrane. One of the components of the core complex of photosystem II (PSII). PSII is a light-driven water:plastoquinone oxidoreductase that uses light energy to abstract electrons from H(2)O, generating O(2) and a proton gradient subsequently used for ATP formation. It consists of a core antenna complex that captures photons, and an electron transfer chain that converts photonic excitation into a charge separation. This chain is Photosystem II reaction center protein K, found in Oryza nivara (Indian wild rice).